Here is a 343-residue protein sequence, read N- to C-terminus: Ribosomal RNA small subunit methyltransferase C (343 aa).

It belongs to the methyltransferase superfamily. RsmC family. As to quaternary structure, monomer.

It localises to the cytoplasm. It carries out the reaction guanosine(1207) in 16S rRNA + S-adenosyl-L-methionine = N(2)-methylguanosine(1207) in 16S rRNA + S-adenosyl-L-homocysteine + H(+). In terms of biological role, specifically methylates the guanine in position 1207 of 16S rRNA in the 30S particle. This chain is Ribosomal RNA small subunit methyltransferase C, found in Shigella flexneri serotype 5b (strain 8401).